Reading from the N-terminus, the 579-residue chain is CTP synthase 1 (579 aa).

The Glutamine amidotransferase type-1 domain occupies 305-559 (KIALVGKYTN…LGLVAASAGI (255 aa)). Catalysis depends on Cys404, which acts as the For GATase activity. A Glycyl lysine isopeptide (Lys-Gly) (interchain with G-Cter in ubiquitin) cross-link involves residue Lys422. Catalysis depends on for GATase activity residues His535 and Glu537.

This sequence belongs to the CTP synthase family. As to quaternary structure, homodimer. Oligomerizes to a tetramer in the presence of its substrates UTP and ATP.

The catalysed reaction is UTP + L-glutamine + ATP + H2O = CTP + L-glutamate + ADP + phosphate + 2 H(+). It participates in pyrimidine metabolism; CTP biosynthesis via de novo pathway; CTP from UDP: step 2/2. Activated by GTP and inhibited by CTP. Functionally, catalyzes the ATP-dependent amination of UTP to CTP with either L-glutamine or ammonia as the source of nitrogen. This Saccharomyces cerevisiae (strain ATCC 204508 / S288c) (Baker's yeast) protein is CTP synthase 1 (URA7).